The following is a 1367-amino-acid chain: Insulin-like growth factor 1 receptor (1367 aa).

The N-terminal stretch at 1 to 30 is a signal peptide; that stretch reads MKSGSGGGSPTSLWGLLFLSAALSLWPTSG. Cysteine 33 and cysteine 52 are oxidised to a cystine. 3 N-linked (GlcNAc...) asparagine glycosylation sites follow: asparagine 51, asparagine 102, and asparagine 135. 13 cysteine pairs are disulfide-bonded: cysteine 150/cysteine 178, cysteine 182/cysteine 205, cysteine 192/cysteine 211, cysteine 215/cysteine 224, cysteine 219/cysteine 230, cysteine 231/cysteine 239, cysteine 235/cysteine 248, cysteine 251/cysteine 260, cysteine 264/cysteine 276, cysteine 282/cysteine 303, cysteine 307/cysteine 321, cysteine 324/cysteine 328, and cysteine 332/cysteine 353. Asparagine 244 carries an N-linked (GlcNAc...) asparagine glycan. N-linked (GlcNAc...) asparagine glycosylation is present at asparagine 314. 2 N-linked (GlcNAc...) asparagine glycosylation sites follow: asparagine 417 and asparagine 438. Cysteine 455 and cysteine 488 are oxidised to a cystine. Fibronectin type-III domains follow at residues 491 to 609, 610 to 708, 735 to 828, and 834 to 927; these read DVLH…TNAS, VPSI…TEAE, PERK…TMPA, and IPGP…VQAK. Asparagine 534, asparagine 607, asparagine 622, asparagine 640, asparagine 747, asparagine 756, asparagine 764, asparagine 900, and asparagine 913 each carry an N-linked (GlcNAc...) asparagine glycan. Topologically, residues 741–935 are extracellular; the sequence is DVMQVANTTM…AKTGYENFIH (195 aa). Residues 936–959 traverse the membrane as a helical segment; sequence LIIALPVAVLLIVGGLVIMLYVFH. The Cytoplasmic segment spans residues 960–1367; that stretch reads RKRNNSRLGN…ALPLPQSSTC (408 aa). The IRS1- and SHC1-binding motif lies at 977-980; the sequence is NPEY. Residue tyrosine 980 is modified to Phosphotyrosine. Positions 999–1274 constitute a Protein kinase domain; it reads ITMSRELGQG…SIKEEMEPGF (276 aa). ATP is bound by residues 1005–1013 and lysine 1033; that span reads LGQGSFGMV. The Proton acceptor role is filled by aspartate 1135. Phosphotyrosine; by autocatalysis is present on residues tyrosine 1161, tyrosine 1165, and tyrosine 1166. Glycyl lysine isopeptide (Lys-Gly) (interchain with G-Cter in ubiquitin) cross-links involve residues lysine 1168 and lysine 1171. At serine 1278 the chain carries Phosphoserine; by GSK3-beta. Serine 1282 bears the Phosphoserine mark. Positions 1288–1367 are disordered; sequence PEPEELDLEP…ALPLPQSSTC (80 aa). The segment covering 1290–1299 has biased composition (acidic residues); the sequence is PEELDLEPEN. Residues 1300–1316 are compositionally biased toward low complexity; that stretch reads MESVPLDPSASSSSLPL. Over residues 1317 to 1326 the composition is skewed to basic and acidic residues; that stretch reads PDRHSGHKAE.

It belongs to the protein kinase superfamily. Tyr protein kinase family. Insulin receptor subfamily. In terms of assembly, tetramer of 2 alpha and 2 beta chains linked by disulfide bonds. The alpha chains contribute to the formation of the ligand-binding domain, while the beta chain carries the kinase domain. Interacts with PIK3R1 and with the PTB/PID domains of IRS1 and SHC1 in vitro when autophosphorylated on tyrosine residues. Forms a hybrid receptor with INSR, the hybrid is a tetramer consisting of 1 alpha chain and 1 beta chain of INSR and 1 alpha chain and 1 beta chain of IGF1R. Interacts with ARRB1 and ARRB2. Interacts with GRB10. Interacts with RACK1. Interacts with SOCS1, SOCS2 and SOCS3. Interacts with 14-3-3 proteins. Interacts with NMD2. Interacts with MAP3K5. Interacts with STAT3. Found in a ternary complex with IGF1 and ITGAV:ITGB3 or ITGA6:ITGB4. Interacts (nascent precursor form) with ZFAND2B. As to quaternary structure, (Microbial infection) Interacts with human respiratory syncytial virus (HRSV) fusion glycoprotein F1/F2 heterodimer. In terms of processing, autophosphorylated on tyrosine residues in response to ligand binding. Autophosphorylation occurs in trans, i.e. one subunit of the dimeric receptor phosphorylates tyrosine residues on the other subunit. Autophosphorylation occurs in a sequential manner; Tyr-1165 is predominantly phosphorylated first, followed by phosphorylation of Tyr-1161 and Tyr-1166. While every single phosphorylation increases kinase activity, all three tyrosine residues in the kinase activation loop (Tyr-1165, Tyr-1161 and Tyr-1166) have to be phosphorylated for optimal activity. Can be autophosphorylated at additional tyrosine residues (in vitro). Autophosphorylated is followed by phosphorylation of juxtamembrane tyrosines and C-terminal serines. May also be phosphorylated at Tyr-1161 and Tyr-1166 by mTORC2. Phosphorylation of Tyr-980 is required for IRS1- and SHC1-binding. Phosphorylation of Ser-1278 by GSK-3beta restrains kinase activity and promotes cell surface expression, it requires a priming phosphorylation at Ser-1282. Dephosphorylated by PTPN1. Post-translationally, polyubiquitinated at Lys-1168 and Lys-1171 through both 'Lys-48' and 'Lys-29' linkages, promoting receptor endocytosis and subsequent degradation by the proteasome. Ubiquitination is facilitated by pre-existing phosphorylation. Sumoylated with SUMO1. In terms of processing, controlled by regulated intramembrane proteolysis (RIP). Undergoes metalloprotease-dependent constitutive ectodomain shedding to produce a membrane-anchored 52 kDa C-Terminal fragment which is further processed by presenilin gamma-secretase to yield an intracellular 50 kDa fragment. Found as a hybrid receptor with INSR in muscle, heart, kidney, adipose tissue, skeletal muscle, hepatoma, fibroblasts, spleen and placenta (at protein level). Expressed in a variety of tissues. Overexpressed in tumors, including melanomas, cancers of the colon, pancreas prostate and kidney.

The protein localises to the cell membrane. It catalyses the reaction L-tyrosyl-[protein] + ATP = O-phospho-L-tyrosyl-[protein] + ADP + H(+). Activated by autophosphorylation at Tyr-1165, Tyr-1161 and Tyr-1166 on the kinase activation loop; phosphorylation at all three tyrosine residues is required for optimal kinase activity. Inhibited by MSC1609119A-1, BMS-754807, PQIP, benzimidazole pyridinone, isoquinolinedione, bis-azaindole, 3-cyanoquinoline, 2,4-bis-arylamino-1,3-pyrimidine, pyrrolopyrimidine, pyrrole-5-carboxaldehyde, picropodophyllin (PPP), tyrphostin derivatives. While most inhibitors bind to the ATP binding pocket, MSC1609119A-1 functions as allosteric inhibitor and binds close to the DFG motif and the activation loop. In terms of biological role, receptor tyrosine kinase which mediates actions of insulin-like growth factor 1 (IGF1). Binds IGF1 with high affinity and IGF2 and insulin (INS) with a lower affinity. The activated IGF1R is involved in cell growth and survival control. IGF1R is crucial for tumor transformation and survival of malignant cell. Ligand binding activates the receptor kinase, leading to receptor autophosphorylation, and tyrosines phosphorylation of multiple substrates, that function as signaling adapter proteins including, the insulin-receptor substrates (IRS1/2), Shc and 14-3-3 proteins. Phosphorylation of IRSs proteins lead to the activation of two main signaling pathways: the PI3K-AKT/PKB pathway and the Ras-MAPK pathway. The result of activating the MAPK pathway is increased cellular proliferation, whereas activating the PI3K pathway inhibits apoptosis and stimulates protein synthesis. Phosphorylated IRS1 can activate the 85 kDa regulatory subunit of PI3K (PIK3R1), leading to activation of several downstream substrates, including protein AKT/PKB. AKT phosphorylation, in turn, enhances protein synthesis through mTOR activation and triggers the antiapoptotic effects of IGFIR through phosphorylation and inactivation of BAD. In parallel to PI3K-driven signaling, recruitment of Grb2/SOS by phosphorylated IRS1 or Shc leads to recruitment of Ras and activation of the ras-MAPK pathway. In addition to these two main signaling pathways IGF1R signals also through the Janus kinase/signal transducer and activator of transcription pathway (JAK/STAT). Phosphorylation of JAK proteins can lead to phosphorylation/activation of signal transducers and activators of transcription (STAT) proteins. In particular activation of STAT3, may be essential for the transforming activity of IGF1R. The JAK/STAT pathway activates gene transcription and may be responsible for the transforming activity. JNK kinases can also be activated by the IGF1R. IGF1 exerts inhibiting activities on JNK activation via phosphorylation and inhibition of MAP3K5/ASK1, which is able to directly associate with the IGF1R. When present in a hybrid receptor with INSR, binds IGF1. PubMed:12138094 shows that hybrid receptors composed of IGF1R and INSR isoform Long are activated with a high affinity by IGF1, with low affinity by IGF2 and not significantly activated by insulin, and that hybrid receptors composed of IGF1R and INSR isoform Short are activated by IGF1, IGF2 and insulin. In contrast, PubMed:16831875 shows that hybrid receptors composed of IGF1R and INSR isoform Long and hybrid receptors composed of IGF1R and INSR isoform Short have similar binding characteristics, both bind IGF1 and have a low affinity for insulin. In Homo sapiens (Human), this protein is Insulin-like growth factor 1 receptor (IGF1R).